Here is a 540-residue protein sequence, read N- to C-terminus: NXPE family member 1 (540 aa).

An N-terminal signal peptide occupies residues 1 to 22; sequence MLHKYLKLICLLAAICVLCIIS. Asparagine 24, asparagine 42, asparagine 87, asparagine 155, asparagine 205, and asparagine 291 each carry an N-linked (GlcNAc...) asparagine glycan.

Belongs to the NXPE family. Intestine, and to a lesser extent in kidney.

The protein localises to the secreted. This chain is NXPE family member 1 (NXPE1), found in Oryctolagus cuniculus (Rabbit).